Consider the following 143-residue polypeptide: uncharacterized protein (143 aa).

One can recognise an HTH marR-type domain in the interval 11-139; it reads EYELTTFIRR…FGELLQRMNK (129 aa). Positions 53-76 form a DNA-binding region, H-T-H motif; the sequence is VKELAESFKLDISTLSRQAAALEA.

This is an uncharacterized protein from Bacillus subtilis (strain 168).